Reading from the N-terminus, the 259-residue chain is MLMVISPAKTLDYETPPATQRFTQPQYLDHSQELIQQLRELSPAQISELMHVSDKIGGLNAARFGSWTPAFTPENAKQALLAFKGDVYTGLDAQSFSEANFDYAQKHLRMLSGLYGLLRPLDLMQPYRLEMGTKLANARGKDLYAFWGTRISEWLNEALADQGDDVLLNLASNEYFSAVKRTALNARIINTEFKDQKNGQYKIISFYAKKARGLMSRFVIQEKINDPALLKQFDVQGYRYSAEQSKPDNLVFLRDHAPE.

This sequence belongs to the UPF0246 family.

This chain is UPF0246 protein Pfl01_0961, found in Pseudomonas fluorescens (strain Pf0-1).